A 290-amino-acid polypeptide reads, in one-letter code: 4-diphosphocytidyl-2-C-methyl-D-erythritol kinase (290 aa).

Lysine 13 is an active-site residue. An ATP-binding site is contributed by 93–103 (PVQAGLGGGSA). Aspartate 135 is a catalytic residue.

Belongs to the GHMP kinase family. IspE subfamily.

It catalyses the reaction 4-CDP-2-C-methyl-D-erythritol + ATP = 4-CDP-2-C-methyl-D-erythritol 2-phosphate + ADP + H(+). It participates in isoprenoid biosynthesis; isopentenyl diphosphate biosynthesis via DXP pathway; isopentenyl diphosphate from 1-deoxy-D-xylulose 5-phosphate: step 3/6. In terms of biological role, catalyzes the phosphorylation of the position 2 hydroxy group of 4-diphosphocytidyl-2C-methyl-D-erythritol. This Desulfitobacterium hafniense (strain Y51) protein is 4-diphosphocytidyl-2-C-methyl-D-erythritol kinase.